The primary structure comprises 293 residues: Cell division protein FtsQ (293 aa).

At 1 to 29 (MSQVRSKSQQGKRQAKPQEVVPATILTEQ) the chain is on the cytoplasmic side. The chain crosses the membrane as a helical span at residues 30–52 (LSTYAFGTVTAGAVMVAVAAWMG). The Periplasmic segment spans residues 53 to 293 (GSLASIDERI…SQIDDKSGGA (241 aa)). Residues 75-144 (FTVTKISIEG…NDIWILAENR (70 aa)) enclose the POTRA domain.

It belongs to the FtsQ/DivIB family. FtsQ subfamily.

It localises to the cell inner membrane. Functionally, essential cell division protein. The sequence is that of Cell division protein FtsQ from Hirschia baltica (strain ATCC 49814 / DSM 5838 / IFAM 1418).